Consider the following 83-residue polypeptide: Cytochrome b559 subunit alpha (83 aa).

Residues 21 to 35 traverse the membrane as a helical segment; it reads VIHSITIPSLFIAGW. Histidine 23 is a heme binding site.

This sequence belongs to the PsbE/PsbF family. Heterodimer of an alpha subunit and a beta subunit. PSII is composed of 1 copy each of membrane proteins PsbA, PsbB, PsbC, PsbD, PsbE, PsbF, PsbH, PsbI, PsbJ, PsbK, PsbL, PsbM, PsbT, PsbX, PsbY, PsbZ, Psb30/Ycf12, at least 3 peripheral proteins of the oxygen-evolving complex and a large number of cofactors. It forms dimeric complexes. The cofactor is heme b.

It localises to the plastid. The protein localises to the chloroplast thylakoid membrane. In terms of biological role, this b-type cytochrome is tightly associated with the reaction center of photosystem II (PSII). PSII is a light-driven water:plastoquinone oxidoreductase that uses light energy to abstract electrons from H(2)O, generating O(2) and a proton gradient subsequently used for ATP formation. It consists of a core antenna complex that captures photons, and an electron transfer chain that converts photonic excitation into a charge separation. The polypeptide is Cytochrome b559 subunit alpha (Phalaenopsis aphrodite subsp. formosana (Moth orchid)).